A 150-amino-acid polypeptide reads, in one-letter code: Large ribosomal subunit protein uL13 (150 aa).

A disordered region spans residues 127 to 150 (KGTEHPHSAQKPQPLQLNPSATAK). Residues 136–150 (QKPQPLQLNPSATAK) show a composition bias toward polar residues.

The protein belongs to the universal ribosomal protein uL13 family. Part of the 50S ribosomal subunit.

In terms of biological role, this protein is one of the early assembly proteins of the 50S ribosomal subunit, although it is not seen to bind rRNA by itself. It is important during the early stages of 50S assembly. The sequence is that of Large ribosomal subunit protein uL13 from Synechococcus sp. (strain CC9902).